Here is a 402-residue protein sequence, read N- to C-terminus: Diaminopimelate decarboxylase (402 aa).

The residue at position 45 (K45) is an N6-(pyridoxal phosphate)lysine. Residues G224 and 259–262 contribute to the pyridoxal 5'-phosphate site; that span reads EPGR. R262, R298, and Y302 together coordinate substrate. The Proton donor role is filled by C327. Positions 328 and 356 each coordinate substrate. Residue Y356 coordinates pyridoxal 5'-phosphate.

Belongs to the Orn/Lys/Arg decarboxylase class-II family. LysA subfamily. Homodimer. It depends on pyridoxal 5'-phosphate as a cofactor.

The catalysed reaction is meso-2,6-diaminopimelate + H(+) = L-lysine + CO2. It participates in amino-acid biosynthesis; L-lysine biosynthesis via DAP pathway; L-lysine from DL-2,6-diaminopimelate: step 1/1. Specifically catalyzes the decarboxylation of meso-diaminopimelate (meso-DAP) to L-lysine. This is Diaminopimelate decarboxylase from Campylobacter jejuni subsp. jejuni serotype O:2 (strain ATCC 700819 / NCTC 11168).